The following is a 228-amino-acid chain: MSSSGNPSSSSGGGGGPCGACKFLRRKCVAGCIFAPYFDSEQGAAHFAAVHKVFGASNVSKLLHHVPEHKRPDAVVSICFEAQARLRDPIYGCVSHIVSLQQQVVSLQTELSYLQAHLATLELPQPQPPQVPVSSSGSLQALSITDLPTISPSVYDLSSIFEPVMSSTWAMQQQPRPSDHLFGVPSSSNMGGGGELQALAREFIHGGQMPAQPSPGTSGSASSVIKRE.

The 103-residue stretch at 16–118 (GPCGACKFLR…TELSYLQAHL (103 aa)) folds into the LOB domain. The tract at residues 188 to 228 (SNMGGGGELQALAREFIHGGQMPAQPSPGTSGSASSVIKRE) is disordered. A compositionally biased stretch (polar residues) spans 214–228 (SPGTSGSASSVIKRE).

The protein belongs to the LOB domain-containing protein family. Expressed in roots, stems, leaves and flowers. Expressed in vascular tissues of hypocotyls, leaves, roots, developing floral organs and siliques.

Its function is as follows. Involved in the positive regulation of tracheary element (TE) differentiation. Involved in a positive feedback loop that maintains or promotes NAC030/VND7 expression that regulates TE differentiation-related genes. This is LOB domain-containing protein 30 (LBD30) from Arabidopsis thaliana (Mouse-ear cress).